A 428-amino-acid chain; its full sequence is MLKGPLKGCLNMSKKVIVIAGTTGVGKSQLSIQLAQKFNGEVINSDSMQVYKDIPIITNKHPLQEREGIPHHVMNHVDWSEEYYSHRFETECMNAIEDIHRRGKIPIVVGGTHYYLQTLFNKRVDTKSSERKLTRKQLDILESTDPDVIYNTLVKCDPDIATKYHPNDYRRVQRMLEIYYKTGKKPSETFNEQKITLKFDTLFLWLYSKPEPLFQRLDDRVDDMLERGALQEIKQLYEYYSQNKFTPEQCENGVWQVIGFKEFLPWLTGKTDDNTVKLEDCIERMKTRTRQYAKRQVKWIKKMLIPDIKGDIYLLDATDLSQWDTNASQRAIAISNDFISNRPIKQERAPKALEELLSKGETTMKKLDDWTHYTCNVCRNADGKNVVAIGEKYWKIHLGSRRHKSNLKRNTRQADFEKWKINKKETVE.

21–28 (GTTGVGKS) is a binding site for ATP. 23–28 (TGVGKS) is a dimethylallyl diphosphate binding site. 2 interaction with substrate tRNA regions span residues 46–49 (DSMQ) and 170–174 (RRVQR). The core aggregation region stretch occupies residues 199 to 207 (FDTLFLWLY). The interval 210-232 (PEPLFQRLDDRVDDMLERGALQE) is interaction with isopentenylpyrophosphate transferase. Interaction with substrate tRNA regions lie at residues 256-258 (QVI) and 284-302 (RMKTRTRQYAKRQVKWIKK). The Matrin-type zinc-finger motif lies at 373–409 (YTCNVCRNADGKNVVAIGEKYWKIHLGSRRHKSNLKR). Residues Cys375, Cys378, His397, and His403 each contribute to the Zn(2+) site.

Belongs to the IPP transferase family.

It localises to the cytoplasm. The protein resides in the mitochondrion. The protein localises to the nucleus. The enzyme catalyses adenosine(37) in tRNA + dimethylallyl diphosphate = N(6)-dimethylallyladenosine(37) in tRNA + diphosphate. Catalyzes the transfer of a dimethylallyl group onto the adenine at position 37 in the anticodon loop on a specific subset of tRNAs both in the cytosol and the mitochondrion, leading to the formation of N6-(dimethylallyl)adenosine (i(6)A). This modification optimizes the codon:anticodon fit in the ribosome and promotes translational fidelity. Competes with the farnesyl pyrophosphate synthase ERG20 for the common substrate dimethylallyl diphosphate (DMAPP). This is tRNA dimethylallyltransferase (MOD5) from Saccharomyces cerevisiae (strain ATCC 204508 / S288c) (Baker's yeast).